The chain runs to 1154 residues: MPVRRGHVAPQNTFLDTIIRKFEGQSRKFIIANARVENCAVIYCNDGFCELCGYSRAEVMQRPCTCDFLHGPRTQRRAAAQIAQALLGAEERKVEIAFYRKDGSCFLCLVDVVPVKNEDGAVIMFILNFEVVMEKDMVGSPARDTNHRAPPTSWLAPGRAKTFRLKLPALLALTARETPVRPGGAGSAGAPGAVVVDVDLTPAAPSSESLALDEVTAMDNHVAGIGPAEERRALVGSGSPPACAPGPHPSPRAHSLNPDGSGSSCSLARTRSRESCASVRRASSADDIEAMRAGALPPPPRHASTGAMHPLRSGLLNSTSDSDLVRYRTISKIPQITLNFVDLKGDPFLASPTSDREIIAPKIKERTHNVTEKVTQVLSLGADVLPEYKLQAPRIHRWTILHYSPFKAVWDWLILLLVIYTAVFTPYSAAFLLKETEEGSQAPDCGYACQPLAVVDLIVDIMFIVDILINFRTTYVNANEEVVSHPGRIAVHYFKGWFLIDMVAAIPFDLLIFGSGSEELIGLLKTARLLRLVRVARKLDRYSEYGAAVLFLLMCTFALIAHWLACIWYAIGNMEQPNMDSHIGWLHNLGDQIGKPYNSSGLGGPSIKDKYVTALYFTFSSLTSVGFGNVSPNTNSEKIFSICVMLIGSLMYASIFGNVSAIIQRLYSGTARYHTQMLRVREFIRFHQIPNPLRQRLEEYFQHAWSYTNGIDMNAVLKGFPECLQADICLHLNRSLLQHCKPFRGATKGCLRALAMKFKTTHAPPGDTLVHAGDLLTALYFISRGSIEILRGDVVVAILGKNDIFGEPLNLYARPGKSNGDVRALTYCDLHKIHRDDLLEVLDMYPEFSDHFWSSLEITFNLRDTNMIPGSPGSTELEGGFNRQRKRKLSFRRRTDKDPEQPGEVSALGPSRAGAGPSGRGQQGGPWGESLSSGPSSPESSEDEGPGRSSSPLRLVPFSSPRPPGELPGGDPLTEDVEKSSDTCNPLSGAFSGVSNIFSFWGDSRGRQYQELPRCPAPAPAPSLLNIPLSSPGRRPRGDVESRLDALQRQLNRLETRLSADMATVLQLLQRQMTLVPPAYSAVTTPGPGPASTSPLLPVSPIPTLTLDSLSQVSQFMACEELPQDGPARRLSLPGQLGALTSQPLHRHGSDPGS.

The Cytoplasmic portion of the chain corresponds to 1–403; it reads MPVRRGHVAP…RIHRWTILHY (403 aa). A PAS domain is found at 41–70; that stretch reads VIYCNDGFCELCGYSRAEVMQRPCTCDFLH. The 53-residue stretch at 92-144 folds into the PAC domain; it reads RKVEIAFYRKDGSCFLCLVDVVPVKNEDGAVIMFILNFEVVMEKDMVGSPARD. Residues 233–312 form a disordered region; sequence ALVGSGSPPA…ASTGAMHPLR (80 aa). Phosphoserine is present on Ser-239. Over residues 258-269 the composition is skewed to polar residues; that stretch reads PDGSGSSCSLAR. A phosphoserine mark is found at Ser-283, Ser-284, Ser-320, and Ser-351. Residues 404–424 traverse the membrane as a helical segment; that stretch reads SPFKAVWDWLILLLVIYTAVF. Residues 425-450 lie on the Extracellular side of the membrane; it reads TPYSAAFLLKETEEGSQAPDCGYACQ. A helical transmembrane segment spans residues 451 to 471; that stretch reads PLAVVDLIVDIMFIVDILINF. At 472-495 the chain is on the cytoplasmic side; the sequence is RTTYVNANEEVVSHPGRIAVHYFK. Residues 496–516 form a helical membrane-spanning segment; that stretch reads GWFLIDMVAAIPFDLLIFGSG. Over 517–520 the chain is Extracellular; the sequence is SEEL. A helical; Voltage-sensor transmembrane segment spans residues 521 to 541; sequence IGLLKTARLLRLVRVARKLDR. Topologically, residues 542-547 are cytoplasmic; sequence YSEYGA. A helical membrane pass occupies residues 548 to 568; sequence AVLFLLMCTFALIAHWLACIW. The Extracellular segment spans residues 569-611; it reads YAIGNMEQPNMDSHIGWLHNLGDQIGKPYNSSGLGGPSIKDKY. The segment at residues 612–632 is an intramembrane region (pore-forming); that stretch reads VTALYFTFSSLTSVGFGNVSP. A Selectivity filter motif is present at residues 624-629; it reads SVGFGN. Over 633–638 the chain is Extracellular; that stretch reads NTNSEK. The helical transmembrane segment at 639–659 threads the bilayer; it reads IFSICVMLIGSLMYASIFGNV. Residues 660 to 1154 are Cytoplasmic-facing; that stretch reads SAIIQRLYSG…LHRHGSDPGS (495 aa). Residues 742–842 are cNMP-binding domain; it reads PFRGATKGCL…IHRDDLLEVL (101 aa). Residues 870–985 form a disordered region; the sequence is GSPGSTELEG…DVEKSSDTCN (116 aa). Phosphoserine occurs at positions 871 and 874. Residues 883–892 show a composition bias toward basic residues; that stretch reads RQRKRKLSFR. The segment covering 916-927 has biased composition (gly residues); it reads GPSGRGQQGGPW. The span at 928-939 shows a compositional bias: low complexity; the sequence is GESLSSGPSSPE. At Arg-1014 the chain carries Omega-N-methylarginine. The stretch at 1037–1064 forms a coiled coil; it reads RGDVESRLDALQRQLNRLETRLSADMAT. The segment at 1125-1154 is disordered; it reads DGPARRLSLPGQLGALTSQPLHRHGSDPGS. A Phosphoserine modification is found at Ser-1132.

It belongs to the potassium channel family. H (Eag) (TC 1.A.1.20) subfamily. Kv11.1/KCNH2 sub-subfamily. As to quaternary structure, the potassium channel is probably composed of a homo- or heterotetrameric complex of pore-forming alpha subunits that can associate with modulating beta subunits. Interacts with DNAJB12 and DNAJB14; chaperones DNAJB12 and DNAJB14 promote tetramerization. Heteromultimer with KCNH6/ERG2 and KCNH7/ERG3. Interacts with ALG10B. Forms a stable complex with KCNE1 or KCNE2, and that this heteromultimerization regulates Inward rectifier potassium channel activity. Interacts with CANX. The core-glycosylated, but not the fully glycosylated form interacts with RNF207. Interacts with NDFIP1 and NDFIP2; this interaction decreases the cell membrane expression by targeting KCNH2, through interaction with NEDD4L, for the degradation through the multivesicular bodies (MVBs)-lysosomal pathway. Post-translationally, phosphorylated on serine and threonine residues. Phosphorylation by PKA inhibits ion conduction.

The protein resides in the cell membrane. The enzyme catalyses K(+)(in) = K(+)(out). Pore-forming (alpha) subunit of voltage-gated inwardly rectifying potassium channel. Characterized by unusual gating kinetics by producing relatively small outward currents during membrane depolarization and large inward currents during subsequent repolarization which reflect a rapid inactivation during depolarization and quick recovery from inactivation but slow deactivation (closing) during repolarization. Channel properties are modulated by cAMP and subunit assembly. Forms a stable complex with KCNE1 or KCNE2, and that this heteromultimerization regulates inward rectifier potassium channel activity. This chain is Voltage-gated inwardly rectifying potassium channel KCNH2, found in Sus scrofa (Pig).